The primary structure comprises 160 residues: Phosphopantetheine adenylyltransferase (160 aa).

Threonine 9 is a binding site for substrate. Residues 9 to 10 (TF) and histidine 17 each bind ATP. Substrate is bound by residues lysine 41, leucine 73, and arginine 87. ATP contacts are provided by residues 88 to 90 (GLR), glutamate 98, and 123 to 129 (YSFLSSS).

It belongs to the bacterial CoaD family. Homohexamer. Requires Mg(2+) as cofactor.

The protein resides in the cytoplasm. It carries out the reaction (R)-4'-phosphopantetheine + ATP + H(+) = 3'-dephospho-CoA + diphosphate. It participates in cofactor biosynthesis; coenzyme A biosynthesis; CoA from (R)-pantothenate: step 4/5. Reversibly transfers an adenylyl group from ATP to 4'-phosphopantetheine, yielding dephospho-CoA (dPCoA) and pyrophosphate. This is Phosphopantetheine adenylyltransferase from Moorella thermoacetica (strain ATCC 39073 / JCM 9320).